Consider the following 275-residue polypeptide: Large ribosomal subunit protein uL2c (275 aa).

The interval Ala-224–Glu-275 is disordered.

Belongs to the universal ribosomal protein uL2 family. In terms of assembly, part of the 50S ribosomal subunit.

It localises to the plastid. It is found in the chloroplast. The sequence is that of Large ribosomal subunit protein uL2c (rpl2) from Picea abies (Norway spruce).